A 245-amino-acid chain; its full sequence is 1-(5-phosphoribosyl)-5-[(5-phosphoribosylamino)methylideneamino] imidazole-4-carboxamide isomerase (245 aa).

Residue Asp7 is the Proton acceptor of the active site. Asp129 (proton donor) is an active-site residue.

It belongs to the HisA/HisF family.

Its subcellular location is the cytoplasm. It catalyses the reaction 1-(5-phospho-beta-D-ribosyl)-5-[(5-phospho-beta-D-ribosylamino)methylideneamino]imidazole-4-carboxamide = 5-[(5-phospho-1-deoxy-D-ribulos-1-ylimino)methylamino]-1-(5-phospho-beta-D-ribosyl)imidazole-4-carboxamide. It participates in amino-acid biosynthesis; L-histidine biosynthesis; L-histidine from 5-phospho-alpha-D-ribose 1-diphosphate: step 4/9. This chain is 1-(5-phosphoribosyl)-5-[(5-phosphoribosylamino)methylideneamino] imidazole-4-carboxamide isomerase, found in Escherichia coli O81 (strain ED1a).